We begin with the raw amino-acid sequence, 570 residues long: Urease subunit alpha (570 aa).

One can recognise a Urease domain in the interval 131 to 570 (GGFDSHIHFI…LPMAQRYFMY (440 aa)). 3 residues coordinate Ni(2+): His136, His138, and Lys219. Position 219 is an N6-carboxylysine (Lys219). His221 contributes to the substrate binding site. The Ni(2+) site is built by His248 and His274. His322 functions as the Proton donor in the catalytic mechanism. Asp362 serves as a coordination point for Ni(2+).

Belongs to the metallo-dependent hydrolases superfamily. Urease alpha subunit family. Heterotrimer of UreA (gamma), UreB (beta) and UreC (alpha) subunits. Three heterotrimers associate to form the active enzyme. Requires Ni cation as cofactor. Carboxylation allows a single lysine to coordinate two nickel ions.

It is found in the cytoplasm. The enzyme catalyses urea + 2 H2O + H(+) = hydrogencarbonate + 2 NH4(+). Its pathway is nitrogen metabolism; urea degradation; CO(2) and NH(3) from urea (urease route): step 1/1. In Rhodopseudomonas palustris (strain HaA2), this protein is Urease subunit alpha.